The following is a 356-amino-acid chain: D-alanine--D-alanine ligase (356 aa).

Residues 134-339 (KQLFEHRGLP…YPELITKLIE (206 aa)) form the ATP-grasp domain. ATP is bound at residue 167 to 222 (NDKLNYPVFVKPANLGSSVGISKCNNEAELKEGIKEAFQFDRKLVIEQGVNAREIE). Residues aspartate 293, glutamate 306, and asparagine 308 each coordinate Mg(2+).

It belongs to the D-alanine--D-alanine ligase family. It depends on Mg(2+) as a cofactor. Requires Mn(2+) as cofactor.

It localises to the cytoplasm. It catalyses the reaction 2 D-alanine + ATP = D-alanyl-D-alanine + ADP + phosphate + H(+). It functions in the pathway cell wall biogenesis; peptidoglycan biosynthesis. Functionally, cell wall formation. The protein is D-alanine--D-alanine ligase of Staphylococcus aureus (strain Mu3 / ATCC 700698).